Here is a 425-residue protein sequence, read N- to C-terminus: Dual-specificity RNA methyltransferase RlmN (425 aa).

The active-site Proton acceptor is the E136. Positions 142–381 (GDDRGTLCVS…FTAGYASPVR (240 aa)) constitute a Radical SAM core domain. C149 and C392 are joined by a disulfide. [4Fe-4S] cluster contacts are provided by C156, C160, and C163. Residues 218 to 219 (GE), S250, 272 to 274 (SLH), and N349 contribute to the S-adenosyl-L-methionine site. The active-site S-methylcysteine intermediate is the C392.

This sequence belongs to the radical SAM superfamily. RlmN family. It depends on [4Fe-4S] cluster as a cofactor.

The protein resides in the cytoplasm. The catalysed reaction is adenosine(2503) in 23S rRNA + 2 reduced [2Fe-2S]-[ferredoxin] + 2 S-adenosyl-L-methionine = 2-methyladenosine(2503) in 23S rRNA + 5'-deoxyadenosine + L-methionine + 2 oxidized [2Fe-2S]-[ferredoxin] + S-adenosyl-L-homocysteine. The enzyme catalyses adenosine(37) in tRNA + 2 reduced [2Fe-2S]-[ferredoxin] + 2 S-adenosyl-L-methionine = 2-methyladenosine(37) in tRNA + 5'-deoxyadenosine + L-methionine + 2 oxidized [2Fe-2S]-[ferredoxin] + S-adenosyl-L-homocysteine. Its function is as follows. Specifically methylates position 2 of adenine 2503 in 23S rRNA and position 2 of adenine 37 in tRNAs. m2A2503 modification seems to play a crucial role in the proofreading step occurring at the peptidyl transferase center and thus would serve to optimize ribosomal fidelity. The polypeptide is Dual-specificity RNA methyltransferase RlmN (Methylorubrum extorquens (strain PA1) (Methylobacterium extorquens)).